The chain runs to 528 residues: 2-isopropylmalate synthase (528 aa).

Residues 12-279 (IRIFDTTLRD…DSSINTPRIV (268 aa)) enclose the Pyruvate carboxyltransferase domain. The Mn(2+) site is built by Asp-21, His-214, His-216, and Asn-250. The interval 401 to 528 (RLASMTISDV…STDVPTPATA (128 aa)) is regulatory domain.

The protein belongs to the alpha-IPM synthase/homocitrate synthase family. LeuA type 1 subfamily. In terms of assembly, homodimer. The cofactor is Mn(2+).

Its subcellular location is the cytoplasm. It carries out the reaction 3-methyl-2-oxobutanoate + acetyl-CoA + H2O = (2S)-2-isopropylmalate + CoA + H(+). Its pathway is amino-acid biosynthesis; L-leucine biosynthesis; L-leucine from 3-methyl-2-oxobutanoate: step 1/4. Its function is as follows. Catalyzes the condensation of the acetyl group of acetyl-CoA with 3-methyl-2-oxobutanoate (2-ketoisovalerate) to form 3-carboxy-3-hydroxy-4-methylpentanoate (2-isopropylmalate). The protein is 2-isopropylmalate synthase of Stenotrophomonas maltophilia (strain K279a).